The sequence spans 262 residues: Thrombin-like enzyme gyroxin B1.3 (262 aa).

The first 18 residues, 1–18 (MVLIRVLANLLILQLSYA), serve as a signal peptide directing secretion. The propeptide occupies 19 to 262 (QKSSELVIGG…AGSETVNCPS (244 aa)). The Peptidase S1 domain occupies 25 to 253 (VIGGDECNIN…HLDWIQNIIA (229 aa)). 6 disulfides stabilise this stretch: cysteine 31–cysteine 165, cysteine 52–cysteine 68, cysteine 102–cysteine 260, cysteine 144–cysteine 214, cysteine 176–cysteine 193, and cysteine 204–cysteine 229. The Charge relay system role is filled by histidine 67. An N-linked (GlcNAc...) asparagine glycan is attached at asparagine 105. The active-site Charge relay system is the aspartate 112. Catalysis depends on serine 208, which acts as the Charge relay system.

This sequence belongs to the peptidase S1 family. Snake venom subfamily. As to quaternary structure, monomer. Expressed by the venom gland.

The protein localises to the secreted. In terms of biological role, thrombin-like snake venom serine protease. Displays a specificity similar to trypsin. Releases only fibrinopeptide A in the conversion of fibrinogen to fibrin. Reversibly increases the permeability of the blood brain barrier (BBB) in mice. Induces the barrel rotation syndrome in mice, which is manifested by gyroxin-like, rapid rolling motions. This syndrome may be due to its effect on BBB permeability, and certainly also to other actions affecting endogenous substrates present in the endothelium, nervous tissues or blood. Also shows a moderate inhibitory activity on the human voltage-gated potassium channel Kv10.1/KCNH1/EAG1 (58% current inhibition at 5 uM). It blocks Kv10.1/KCNH1/EAG1 in a time and dose-dependent manner and with a mechanism independent of its enzymatic activity. It may have a preference in interacting with Kv10.1/KCNH1/EAG1 in its closed state, since the inhibitory effect of the toxin is decreased at more depolarized potentials. This Crotalus durissus terrificus (South American rattlesnake) protein is Thrombin-like enzyme gyroxin B1.3.